The following is a 272-amino-acid chain: 4-hydroxy-tetrahydrodipicolinate reductase (272 aa).

NAD(+) is bound by residues Gly12–Met17 and Glu38. Residue Arg39 coordinates NADP(+). NAD(+)-binding positions include Gly102–Thr104 and Ser126–Met129. His160 acts as the Proton donor/acceptor in catalysis. His161 provides a ligand contact to (S)-2,3,4,5-tetrahydrodipicolinate. The Proton donor role is filled by Lys164. Gly170–Thr171 provides a ligand contact to (S)-2,3,4,5-tetrahydrodipicolinate.

It belongs to the DapB family.

Its subcellular location is the cytoplasm. The enzyme catalyses (S)-2,3,4,5-tetrahydrodipicolinate + NAD(+) + H2O = (2S,4S)-4-hydroxy-2,3,4,5-tetrahydrodipicolinate + NADH + H(+). The catalysed reaction is (S)-2,3,4,5-tetrahydrodipicolinate + NADP(+) + H2O = (2S,4S)-4-hydroxy-2,3,4,5-tetrahydrodipicolinate + NADPH + H(+). It participates in amino-acid biosynthesis; L-lysine biosynthesis via DAP pathway; (S)-tetrahydrodipicolinate from L-aspartate: step 4/4. Its function is as follows. Catalyzes the conversion of 4-hydroxy-tetrahydrodipicolinate (HTPA) to tetrahydrodipicolinate. This chain is 4-hydroxy-tetrahydrodipicolinate reductase, found in Sinorhizobium medicae (strain WSM419) (Ensifer medicae).